A 293-amino-acid polypeptide reads, in one-letter code: Putative peptidyl-prolyl cis-trans isomerase NifM (293 aa).

A PpiC domain is found at 142-244 (PARHKARHIL…IGFHVLFCES (103 aa)).

Belongs to the PpiC/parvulin rotamase family.

The enzyme catalyses [protein]-peptidylproline (omega=180) = [protein]-peptidylproline (omega=0). In terms of biological role, required for the activation and stabilization of the iron-component (NifH) of nitrogenase. Probable PPIase. In Azotobacter chroococcum mcd 1, this protein is Putative peptidyl-prolyl cis-trans isomerase NifM (nifM).